We begin with the raw amino-acid sequence, 585 residues long: DNA mismatch repair protein MutL (585 aa).

Belongs to the DNA mismatch repair MutL/HexB family.

In terms of biological role, this protein is involved in the repair of mismatches in DNA. It is required for dam-dependent methyl-directed DNA mismatch repair. May act as a 'molecular matchmaker', a protein that promotes the formation of a stable complex between two or more DNA-binding proteins in an ATP-dependent manner without itself being part of a final effector complex. The polypeptide is DNA mismatch repair protein MutL (Methanoculleus marisnigri (strain ATCC 35101 / DSM 1498 / JR1)).